Here is a 161-residue protein sequence, read N- to C-terminus: Regulator of ribonuclease activity A (161 aa).

This sequence belongs to the RraA family. As to quaternary structure, homotrimer. Binds to both RNA-binding sites in the C-terminal region of Rne and to RhlB.

The protein localises to the cytoplasm. In terms of biological role, globally modulates RNA abundance by binding to RNase E (Rne) and regulating its endonucleolytic activity. Can modulate Rne action in a substrate-dependent manner by altering the composition of the degradosome. Modulates RNA-binding and helicase activities of the degradosome. This chain is Regulator of ribonuclease activity A, found in Shigella dysenteriae serotype 1 (strain Sd197).